The following is a 762-amino-acid chain: Protein PHTF1 (762 aa).

The 145-residue stretch at 6–150 (RDAISWYQKK…VHCQIVSTQI (145 aa)) folds into the PHTF domain. The next 3 helical transmembrane spans lie at 77-97 (GLVRVVFFPLFSNWWIQVTSL), 99-119 (IFVWLLLLYFMQVIAIVLYLM), and 121-141 (PIVNISEVLGPLCLMLLMGTV). The interval 152-184 (RPSGNNGNRRRRKLRKTVNGDGSRENGNNSSDK) is disordered. N-linked (GlcNAc...) asparagine glycosylation is found at Asn-179 and Asn-180. Phosphoserine is present on residues Ser-272, Ser-276, Ser-277, Ser-334, and Ser-336. Disordered regions lie at residues 344-380 (SAAFSQGSRSGVSGGSRSLNMSRRDSESTRHDSETED) and 393-415 (RSSVTSDSEGAHVNTLHSGTKRD). A compositionally biased stretch (low complexity) spans 348-361 (SQGSRSGVSGGSRS). N-linked (GlcNAc...) asparagine glycosylation is present at Asn-363. The segment covering 365–376 (SRRDSESTRHDS) has biased composition (basic and acidic residues). A glycan (N-linked (GlcNAc...) asparagine) is linked at Asn-431. The next 4 membrane-spanning stretches (helical) occupy residues 473–493 (GVGYQMLGNVVTIGLAFFPFL), 512–532 (EILTLFCGAPPVTPIIVLSII), 611–631 (VVVSSVFLLTLSIAFICCAQV), and 645–665 (WEFLIWETALLLFLLRLASLG). Asn-674 and Asn-733 each carry an N-linked (GlcNAc...) asparagine glycan. Residues 737–757 (VVILSAVSGVISDLLGFNIRL) form a helical membrane-spanning segment.

As to quaternary structure, interacts with FEM1B. Widely expressed with highest levels in testis.

The protein resides in the endoplasmic reticulum membrane. Its subcellular location is the golgi apparatus. The protein localises to the cis-Golgi network membrane. This chain is Protein PHTF1, found in Homo sapiens (Human).